Reading from the N-terminus, the 490-residue chain is Serine hydroxymethyltransferase, mitochondrial (490 aa).

The transit peptide at 1–20 (MFPRASALAKCMATVHRRGL) directs the protein to the mitochondrion. K265 is subject to N6-(pyridoxal phosphate)lysine.

Belongs to the SHMT family. Homotetramer. Interacts with NAP1. Pyridoxal 5'-phosphate serves as cofactor.

The protein resides in the mitochondrion. It carries out the reaction (6R)-5,10-methylene-5,6,7,8-tetrahydrofolate + glycine + H2O = (6S)-5,6,7,8-tetrahydrofolate + L-serine. Its pathway is one-carbon metabolism; tetrahydrofolate interconversion. Interconversion of serine and glycine. In Saccharomyces cerevisiae (strain ATCC 204508 / S288c) (Baker's yeast), this protein is Serine hydroxymethyltransferase, mitochondrial (SHM1).